A 155-amino-acid polypeptide reads, in one-letter code: Endoribonuclease YbeY (155 aa).

Zn(2+) is bound by residues His116, His120, and His126.

It belongs to the endoribonuclease YbeY family. The cofactor is Zn(2+).

It is found in the cytoplasm. Functionally, single strand-specific metallo-endoribonuclease involved in late-stage 70S ribosome quality control and in maturation of the 3' terminus of the 16S rRNA. The chain is Endoribonuclease YbeY from Colwellia psychrerythraea (strain 34H / ATCC BAA-681) (Vibrio psychroerythus).